The primary structure comprises 288 residues: Serine/threonine-protein phosphatase PGAM5, mitochondrial (288 aa).

Residues 1–6 (MAFRQA) lie on the Mitochondrial matrix side of the membrane. A helical transmembrane segment spans residues 7 to 29 (LQLAACGLAGGSAAVLFSAVAVG). At 30–288 (KPRGGGDADT…FMPPDKITRS (259 aa)) the chain is on the mitochondrial intermembrane side. The interval 76 to 81 (NVESGE) is interaction with KEAP1. Phosphoserine occurs at positions 79 and 86. An N6-acetyllysine mark is found at K115, K143, and K190.

This sequence belongs to the phosphoglycerate mutase family. BPG-dependent PGAM subfamily. In terms of assembly, dimer. Forms a ternary complex with NFE2L2 and KEAP1. Interacts with BCL2L1 and MAP3K5. Upon TNF-induced necrosis, forms in complex with RIPK1, RIPK3 and MLKL; the formation of this complex leads to PGAM5 phosphorylation. Isoform 2, but not isoform 1, interacts with DNM1L; this interaction leads to DNM1L dephosphorylation and activation and eventually to mitochondria fragmentation. In terms of processing, phosphorylated by the RIPK1/RIPK3 complex under necrotic conditions. This phosphorylation increases PGAM5 phosphatase activity. Post-translationally, proteolytically cleaved by PARL in response to loss of mitochondrial membrane potential.

It localises to the mitochondrion outer membrane. The protein resides in the mitochondrion inner membrane. It carries out the reaction O-phospho-L-seryl-[protein] + H2O = L-seryl-[protein] + phosphate. The enzyme catalyses O-phospho-L-threonyl-[protein] + H2O = L-threonyl-[protein] + phosphate. Functionally, mitochondrial serine/threonine phosphatase that dephosphorylates various substrates and thus plays a role in different biological processes including cellular senescence or mitophagy. Modulates cellular senescence by regulating mitochondrial dynamics. Mechanistically, participates in mitochondrial fission through dephosphorylating DNM1L/DRP1. Additionally, dephosphorylates MFN2 in a stress-sensitive manner and consequently protects it from ubiquitination and degradation to promote mitochondrial network formation. Regulates mitophagy independent of PARKIN by interacting with and dephosphorylating FUNDC1, which interacts with LC3. Regulates anti-oxidative response by forming a tertiary complex with KEAP1 and NRF2. Regulates necroptosis by acting as a RIPK3 target and recruiting the RIPK1-RIPK3-MLKL necrosis 'attack' complex to mitochondria. This chain is Serine/threonine-protein phosphatase PGAM5, mitochondrial (Pgam5), found in Mus musculus (Mouse).